Here is a 122-residue protein sequence, read N- to C-terminus: MADSGGSSPWWKSLTRKKSKEVTVGVQPQVRPETGQEPSPPHSDRTSSLPENQHSNILGDPGESLRSDKLCEEKTGNSRRNLKISRSGRFKEKRKMRATLLPEGDKSPEEADFPDDPQEDKQ.

The segment at 1 to 122 (MADSGGSSPW…FPDDPQEDKQ (122 aa)) is disordered. The residue at position 39 (S39) is a Phosphoserine. Positions 46–56 (TSSLPENQHSN) are enriched in polar residues. Basic and acidic residues predominate over residues 63 to 76 (ESLRSDKLCEEKTG). The segment covering 80–97 (RNLKISRSGRFKEKRKMR) has biased composition (basic residues). Acidic residues predominate over residues 110 to 122 (EADFPDDPQEDKQ).

This sequence belongs to the PRR15 family. Exhibits a cell type specific expression pattern only in the small and large intestine and in the testis. Along the intestinal tract expression is restricted to the non-proliferating epithelial cells surrounding the villi and no expression is found in the intestinal crypts, where proliferation occurs. In the testis, it is detected only in post-mitotic secondary spermatocytes.

Functionally, may have a role in proliferation and/or differentiation. The polypeptide is Proline-rich protein 15 (Prr15) (Mus musculus (Mouse)).